An 890-amino-acid chain; its full sequence is Alanine--tRNA ligase (890 aa).

Zn(2+)-binding residues include histidine 568, histidine 572, cysteine 680, and histidine 684.

Belongs to the class-II aminoacyl-tRNA synthetase family. Requires Zn(2+) as cofactor.

The protein localises to the cytoplasm. It carries out the reaction tRNA(Ala) + L-alanine + ATP = L-alanyl-tRNA(Ala) + AMP + diphosphate. Its function is as follows. Catalyzes the attachment of alanine to tRNA(Ala) in a two-step reaction: alanine is first activated by ATP to form Ala-AMP and then transferred to the acceptor end of tRNA(Ala). Also edits incorrectly charged Ser-tRNA(Ala) and Gly-tRNA(Ala) via its editing domain. In Psychrobacter arcticus (strain DSM 17307 / VKM B-2377 / 273-4), this protein is Alanine--tRNA ligase.